Consider the following 227-residue polypeptide: Phosphoribosylformylglycinamidine synthase subunit PurQ (227 aa).

Residues 3 to 225 (FAVIVFPGSN…LKQWRETYVV (223 aa)) form the Glutamine amidotransferase type-1 domain. The active-site Nucleophile is C86. Catalysis depends on residues H194 and E196.

As to quaternary structure, part of the FGAM synthase complex composed of 1 PurL, 1 PurQ and 2 PurS subunits.

Its subcellular location is the cytoplasm. It catalyses the reaction N(2)-formyl-N(1)-(5-phospho-beta-D-ribosyl)glycinamide + L-glutamine + ATP + H2O = 2-formamido-N(1)-(5-O-phospho-beta-D-ribosyl)acetamidine + L-glutamate + ADP + phosphate + H(+). It carries out the reaction L-glutamine + H2O = L-glutamate + NH4(+). Its pathway is purine metabolism; IMP biosynthesis via de novo pathway; 5-amino-1-(5-phospho-D-ribosyl)imidazole from N(2)-formyl-N(1)-(5-phospho-D-ribosyl)glycinamide: step 1/2. Functionally, part of the phosphoribosylformylglycinamidine synthase complex involved in the purines biosynthetic pathway. Catalyzes the ATP-dependent conversion of formylglycinamide ribonucleotide (FGAR) and glutamine to yield formylglycinamidine ribonucleotide (FGAM) and glutamate. The FGAM synthase complex is composed of three subunits. PurQ produces an ammonia molecule by converting glutamine to glutamate. PurL transfers the ammonia molecule to FGAR to form FGAM in an ATP-dependent manner. PurS interacts with PurQ and PurL and is thought to assist in the transfer of the ammonia molecule from PurQ to PurL. This Bacillus mycoides (strain KBAB4) (Bacillus weihenstephanensis) protein is Phosphoribosylformylglycinamidine synthase subunit PurQ.